The following is a 23-amino-acid chain: Aldehyde dehydrogenase (23 aa).

It belongs to the aldehyde dehydrogenase family.

It catalyses the reaction an aldehyde + NAD(+) + H2O = a carboxylate + NADH + 2 H(+). The protein is Aldehyde dehydrogenase of Moraxella sp. (strain TAE123).